The primary structure comprises 298 residues: Acetylglutamate kinase (298 aa).

Residues 69 to 70 (GG), Arg-91, and Asn-196 each bind substrate.

Belongs to the acetylglutamate kinase family. ArgB subfamily.

It localises to the cytoplasm. The catalysed reaction is N-acetyl-L-glutamate + ATP = N-acetyl-L-glutamyl 5-phosphate + ADP. Its pathway is amino-acid biosynthesis; L-arginine biosynthesis; N(2)-acetyl-L-ornithine from L-glutamate: step 2/4. Its function is as follows. Catalyzes the ATP-dependent phosphorylation of N-acetyl-L-glutamate. The sequence is that of Acetylglutamate kinase from Bradyrhizobium sp. (strain BTAi1 / ATCC BAA-1182).